Consider the following 153-residue polypeptide: Pheromone-binding protein Gp-9 (153 aa).

The N-terminal stretch at 1-19 (MKTFVLHIFIFALVAFASA) is a signal peptide. 3 cysteine pairs are disulfide-bonded: Cys-37/Cys-77, Cys-73/Cys-129, and Cys-118/Cys-138.

The protein belongs to the PBP/GOBP family. In terms of assembly, homodimer.

It localises to the secreted. In terms of biological role, colony queen number, a major feature of social organization, is associated with worker genotype for Gp-9. Colonies are headed by either a single reproductive queen (monogyne form) or multiple queens (polygyne form). Differences in worker Gp-9 genotypes between social forms may cause differences in workers' abilities to recognize queens and regulate their numbers. This chain is Pheromone-binding protein Gp-9, found in Solenopsis richteri (Black imported fire ant).